The primary structure comprises 575 residues: Alpha-humulene synthase (575 aa).

Positions 325, 329, 469, and 477 each coordinate Mg(2+). Positions 325–329 match the DDXXD motif motif; it reads DDLYD.

The protein belongs to the terpene synthase family. Tpsa subfamily. The cofactor is Mg(2+). Requires Mn(2+) as cofactor.

The catalysed reaction is (2E,6E)-farnesyl diphosphate = alpha-humulene + diphosphate. The protein operates within sesquiterpene biosynthesis. It functions in the pathway terpene metabolism; oleoresin biosynthesis. Terpene synthase (TPS) involved in the biosynthesis of sesquiterpene natural products included in conifer oleoresin secretions and volatile emissions; these compounds contribute to biotic and abiotic stress defense against herbivores and pathogens. Catalyzes the conversion of (2E,6E)-farnesyl diphosphate (FPP) to (1E,4E,8E)-alpha-humulene. In Picea glauca (White spruce), this protein is Alpha-humulene synthase.